The primary structure comprises 404 residues: DNA gyrase subunit B (404 aa).

The Toprim domain maps to 321 to 404; it reads SEIYIVEGDS…VIIMTDADVD (84 aa). 3 residues coordinate Mg(2+): Glu327, Asp400, and Asp402.

It belongs to the type II topoisomerase GyrB family. Heterotetramer, composed of two GyrA and two GyrB chains. In the heterotetramer, GyrA contains the active site tyrosine that forms a transient covalent intermediate with DNA, while GyrB binds cofactors and catalyzes ATP hydrolysis. Mg(2+) is required as a cofactor. It depends on Mn(2+) as a cofactor. Requires Ca(2+) as cofactor.

Its subcellular location is the cytoplasm. The enzyme catalyses ATP-dependent breakage, passage and rejoining of double-stranded DNA.. A type II topoisomerase that negatively supercoils closed circular double-stranded (ds) DNA in an ATP-dependent manner to modulate DNA topology and maintain chromosomes in an underwound state. Negative supercoiling favors strand separation, and DNA replication, transcription, recombination and repair, all of which involve strand separation. Also able to catalyze the interconversion of other topological isomers of dsDNA rings, including catenanes and knotted rings. Type II topoisomerases break and join 2 DNA strands simultaneously in an ATP-dependent manner. This chain is DNA gyrase subunit B (gyrB), found in Bacillus mycoides.